Consider the following 299-residue polypeptide: ATP phosphoribosyltransferase (299 aa).

It belongs to the ATP phosphoribosyltransferase family. Long subfamily. Mg(2+) serves as cofactor.

The protein localises to the cytoplasm. It carries out the reaction 1-(5-phospho-beta-D-ribosyl)-ATP + diphosphate = 5-phospho-alpha-D-ribose 1-diphosphate + ATP. It functions in the pathway amino-acid biosynthesis; L-histidine biosynthesis; L-histidine from 5-phospho-alpha-D-ribose 1-diphosphate: step 1/9. With respect to regulation, feedback inhibited by histidine. Functionally, catalyzes the condensation of ATP and 5-phosphoribose 1-diphosphate to form N'-(5'-phosphoribosyl)-ATP (PR-ATP). Has a crucial role in the pathway because the rate of histidine biosynthesis seems to be controlled primarily by regulation of HisG enzymatic activity. This Campylobacter jejuni subsp. doylei (strain ATCC BAA-1458 / RM4099 / 269.97) protein is ATP phosphoribosyltransferase.